Here is a 164-residue protein sequence, read N- to C-terminus: Phosphopantetheine adenylyltransferase (164 aa).

Ser-9 contacts substrate. ATP is bound by residues 9–10 (SF) and His-17. Substrate-binding residues include Lys-41, Val-78, and Arg-92. Residues 93 to 95 (GLR), Glu-103, and 128 to 134 (VRTITAT) each bind ATP.

This sequence belongs to the bacterial CoaD family. As to quaternary structure, homohexamer. Requires Mg(2+) as cofactor.

It is found in the cytoplasm. It catalyses the reaction (R)-4'-phosphopantetheine + ATP + H(+) = 3'-dephospho-CoA + diphosphate. It functions in the pathway cofactor biosynthesis; coenzyme A biosynthesis; CoA from (R)-pantothenate: step 4/5. Functionally, reversibly transfers an adenylyl group from ATP to 4'-phosphopantetheine, yielding dephospho-CoA (dPCoA) and pyrophosphate. The sequence is that of Phosphopantetheine adenylyltransferase from Brucella suis (strain ATCC 23445 / NCTC 10510).